A 95-amino-acid polypeptide reads, in one-letter code: FXYD domain-containing ion transport regulator 6 (95 aa).

A signal peptide spans 1–18 (MEVVLLFLCGLLAPAVLA). Residues 19 to 35 (SATEQEKEKDPFHYDYQ) are Extracellular-facing. The chain crosses the membrane as a helical span at residues 36 to 58 (TLRIGGLVFAVVLFSVGILLILS). Topologically, residues 59-95 (RRCKCSFNQKPRAPGDEEAQVENLVTANATEPQKAEN) are cytoplasmic. The interval 69–95 (PRAPGDEEAQVENLVTANATEPQKAEN) is disordered.

This sequence belongs to the FXYD family. In terms of assembly, regulatory subunit of the sodium/potassium-transporting ATPase which is composed of a catalytic alpha subunit, a non-catalytic beta subunit and an additional regulatory subunit. The regulatory subunit, a member of the FXYD protein family, modulates the enzymatic activity in a tissue- and isoform-specific way by changing affinities of the Na+/K+-ATPase toward Na(+), K(+) or ATP.

The protein localises to the cell membrane. Its function is as follows. Associates with and regulates the activity of the sodium/potassium-transporting ATPase (NKA) which catalyzes the hydrolysis of ATP coupled with the exchange of Na(+) and K(+) ions across the plasma membrane. Reduces the apparent affinity for intracellular Na(+) with no change in the apparent affinity for extracellular K(+). In addition to modulating NKA kinetics, may also function as a regulator of NKA localization to the plasma membrane. This is FXYD domain-containing ion transport regulator 6 (FXYD6) from Bos taurus (Bovine).